A 142-amino-acid polypeptide reads, in one-letter code: MAKPLWLSLILFIIPVALAVGVDQSKNEVKAQNYFGSINISNANVKQCVWFAMKEYNKESEDKYVFLVDKILHAKLQITDRMEYQIDVQISRSNCKKPLNNTENCIPQKKPELEKKMSCSFLVGALPWNGEFNLLSKECKDV.

Residues 1-19 form the signal peptide; it reads MAKPLWLSLILFIIPVALA. N-linked (GlcNAc...) asparagine glycosylation occurs at asparagine 39. A Secondary area of contact motif is present at residues 77 to 81; the sequence is QITDR. Cystine bridges form between cysteine 95/cysteine 105 and cysteine 119/cysteine 139. Asparagine 100 carries an N-linked (GlcNAc...) asparagine glycan.

It belongs to the cystatin family. As to expression, proximal caput region of the epididymis. Lower expression in the testis. Within the testis it is localized to the elongating spermatids, whereas within the epididymis it is exclusively synthesized by the proximal caput epithelium.

It is found in the secreted. Functionally, performs a specialized role during sperm development and maturation. In Mus musculus (Mouse), this protein is Cystatin-8 (Cst8).